A 265-amino-acid polypeptide reads, in one-letter code: MSRIQKTFAALAAQNKKGLIPFITAGDPEPGLTVDLMHALVAGGADVIELGVPFSDPMADGPVIQRASERALANGVSLTQVLQWVREFRQTNADTPVVLMGYANPIERMGEAAFAKAAGAAGVDGVLVVDYPPEECESFAVLMRDNGIDPIFLLAPTSTDARIEAVGKVASGYVYYVSLKGVTGSATLDLDSVAARLPLIKKHVNLPVGVGFGIRDAQTARAIGSVADAVVIGSRLVQLLEDAPRGQAVESLRAFIAGIREALDA.

Catalysis depends on proton acceptor residues Glu-49 and Asp-60.

It belongs to the TrpA family. As to quaternary structure, tetramer of two alpha and two beta chains.

The catalysed reaction is (1S,2R)-1-C-(indol-3-yl)glycerol 3-phosphate + L-serine = D-glyceraldehyde 3-phosphate + L-tryptophan + H2O. The protein operates within amino-acid biosynthesis; L-tryptophan biosynthesis; L-tryptophan from chorismate: step 5/5. Functionally, the alpha subunit is responsible for the aldol cleavage of indoleglycerol phosphate to indole and glyceraldehyde 3-phosphate. The chain is Tryptophan synthase alpha chain from Cupriavidus pinatubonensis (strain JMP 134 / LMG 1197) (Cupriavidus necator (strain JMP 134)).